A 407-amino-acid chain; its full sequence is Probable tRNA sulfurtransferase (407 aa).

The THUMP domain occupies 61 to 165 (NEIIQRLSKV…MDAIYIYEKV (105 aa)). Residues 183 to 184 (ML), 208 to 209 (HF), R265, G287, and Q296 contribute to the ATP site.

This sequence belongs to the ThiI family.

The protein localises to the cytoplasm. It catalyses the reaction [ThiI sulfur-carrier protein]-S-sulfanyl-L-cysteine + a uridine in tRNA + 2 reduced [2Fe-2S]-[ferredoxin] + ATP + H(+) = [ThiI sulfur-carrier protein]-L-cysteine + a 4-thiouridine in tRNA + 2 oxidized [2Fe-2S]-[ferredoxin] + AMP + diphosphate. The enzyme catalyses [ThiS sulfur-carrier protein]-C-terminal Gly-Gly-AMP + S-sulfanyl-L-cysteinyl-[cysteine desulfurase] + AH2 = [ThiS sulfur-carrier protein]-C-terminal-Gly-aminoethanethioate + L-cysteinyl-[cysteine desulfurase] + A + AMP + 2 H(+). The protein operates within cofactor biosynthesis; thiamine diphosphate biosynthesis. Functionally, catalyzes the ATP-dependent transfer of a sulfur to tRNA to produce 4-thiouridine in position 8 of tRNAs, which functions as a near-UV photosensor. Also catalyzes the transfer of sulfur to the sulfur carrier protein ThiS, forming ThiS-thiocarboxylate. This is a step in the synthesis of thiazole, in the thiamine biosynthesis pathway. The sulfur is donated as persulfide by IscS. In Staphylococcus epidermidis (strain ATCC 35984 / DSM 28319 / BCRC 17069 / CCUG 31568 / BM 3577 / RP62A), this protein is Probable tRNA sulfurtransferase.